The chain runs to 181 residues: Large ribosomal subunit protein bL19 (181 aa).

A compositionally biased stretch (basic and acidic residues) spans 162-173 (EKKAAAEAEAAK). The tract at residues 162–181 (EKKAAAEAEAAKAAEATPAE) is disordered.

This sequence belongs to the bacterial ribosomal protein bL19 family.

Functionally, this protein is located at the 30S-50S ribosomal subunit interface and may play a role in the structure and function of the aminoacyl-tRNA binding site. This Mesorhizobium japonicum (strain LMG 29417 / CECT 9101 / MAFF 303099) (Mesorhizobium loti (strain MAFF 303099)) protein is Large ribosomal subunit protein bL19.